The primary structure comprises 435 residues: Adenylosuccinate synthetase (435 aa).

GTP is bound by residues 17 to 23 (GDEGKGK) and 45 to 47 (GHT). D18 (proton acceptor) is an active-site residue. Residues D18 and G45 each coordinate Mg(2+). IMP is bound by residues 18 to 21 (DEGK), 43 to 46 (NAGH), T134, R148, Q229, T244, and R308. H46 (proton donor) is an active-site residue. Substrate is bound at residue 304-310 (SVTGRPR). GTP contacts are provided by residues R310, 336-338 (KLD), and 418-420 (STG).

Belongs to the adenylosuccinate synthetase family. Homodimer. Mg(2+) serves as cofactor.

It is found in the cytoplasm. The enzyme catalyses IMP + L-aspartate + GTP = N(6)-(1,2-dicarboxyethyl)-AMP + GDP + phosphate + 2 H(+). The protein operates within purine metabolism; AMP biosynthesis via de novo pathway; AMP from IMP: step 1/2. Functionally, plays an important role in the de novo pathway of purine nucleotide biosynthesis. Catalyzes the first committed step in the biosynthesis of AMP from IMP. The chain is Adenylosuccinate synthetase from Bordetella pertussis (strain Tohama I / ATCC BAA-589 / NCTC 13251).